The following is a 375-amino-acid chain: Deoxyhypusine synthase-like protein (375 aa).

The protein belongs to the deoxyhypusine synthase family.

The protein is Deoxyhypusine synthase-like protein of Elusimicrobium minutum (strain Pei191).